Consider the following 547-residue polypeptide: Chaperonin GroEL (547 aa).

Residues 30–33 (TLGP), Lys-51, 87–91 (DGTTT), Gly-415, 479–481 (NAA), and Asp-495 contribute to the ATP site.

This sequence belongs to the chaperonin (HSP60) family. In terms of assembly, forms a cylinder of 14 subunits composed of two heptameric rings stacked back-to-back. Interacts with the co-chaperonin GroES.

The protein resides in the cytoplasm. It catalyses the reaction ATP + H2O + a folded polypeptide = ADP + phosphate + an unfolded polypeptide.. Together with its co-chaperonin GroES, plays an essential role in assisting protein folding. The GroEL-GroES system forms a nano-cage that allows encapsulation of the non-native substrate proteins and provides a physical environment optimized to promote and accelerate protein folding. The polypeptide is Chaperonin GroEL (Pseudomonas aeruginosa (strain UCBPP-PA14)).